The sequence spans 411 residues: Serine hydroxymethyltransferase (411 aa).

(6S)-5,6,7,8-tetrahydrofolate-binding positions include Leu119 and 123 to 125; that span reads GHL. Lys228 is subject to N6-(pyridoxal phosphate)lysine.

The protein belongs to the SHMT family. As to quaternary structure, homodimer. It depends on pyridoxal 5'-phosphate as a cofactor.

It localises to the cytoplasm. It catalyses the reaction (6R)-5,10-methylene-5,6,7,8-tetrahydrofolate + glycine + H2O = (6S)-5,6,7,8-tetrahydrofolate + L-serine. The protein operates within one-carbon metabolism; tetrahydrofolate interconversion. It participates in amino-acid biosynthesis; glycine biosynthesis; glycine from L-serine: step 1/1. Functionally, catalyzes the reversible interconversion of serine and glycine with tetrahydrofolate (THF) serving as the one-carbon carrier. This reaction serves as the major source of one-carbon groups required for the biosynthesis of purines, thymidylate, methionine, and other important biomolecules. Also exhibits THF-independent aldolase activity toward beta-hydroxyamino acids, producing glycine and aldehydes, via a retro-aldol mechanism. The sequence is that of Serine hydroxymethyltransferase from Clostridium kluyveri (strain NBRC 12016).